A 337-amino-acid polypeptide reads, in one-letter code: Inositol 2-dehydrogenase (337 aa).

This sequence belongs to the Gfo/Idh/MocA family. As to quaternary structure, homotetramer.

It catalyses the reaction myo-inositol + NAD(+) = scyllo-inosose + NADH + H(+). In terms of biological role, involved in the oxidation of myo-inositol (MI) to 2-keto-myo-inositol (2KMI or 2-inosose). This is Inositol 2-dehydrogenase from Burkholderia vietnamiensis (strain G4 / LMG 22486) (Burkholderia cepacia (strain R1808)).